Consider the following 531-residue polypeptide: Probable mitochondrial-processing peptidase subunit beta, mitochondrial (531 aa).

The N-terminal 78 residues, 1–78 (MAMKNLLSLA…ENPDKRFLKY (78 aa)), are a transit peptide targeting the mitochondrion. Positions 30-50 (SAIDSVPASASPTALSPPPPH) are disordered. Residue His-141 participates in Zn(2+) binding. Residue Glu-144 is the Proton acceptor of the active site. Residue His-145 coordinates Zn(2+). Glu-214 is a catalytic residue. Zn(2+) is bound at residue Glu-221.

It belongs to the peptidase M16 family. In terms of assembly, heterodimer of an alpha subunit and a beta subunit subunits, forming the mitochondrial processing protease (MPP) in which the alpha subunit is involved in substrate recognition and binding and the beta subunit is the catalytic subunit. Component of the ubiquinol-cytochrome c oxidoreductase (cytochrome b-c1 complex, complex III, CIII), a multisubunit enzyme composed of 10 subunits. The complex is composed of 3 respiratory subunits cytochrome b (MT-CYB), cytochrome c1 (CYC1-1 or CYC1-2) and Rieske protein (UCR1-1 or UCR1-2), 2 core protein subunits MPPalpha1 (or MPPalpha2) and MPPB, and 5 low-molecular weight protein subunits QCR7-1 (or QCR7-2), UCRQ-1 (or UCRQ-2), QCR9, UCRY and probably QCR6-1 (or QCR6-2). The complex exists as an obligatory dimer and forms supercomplexes (SCs) in the inner mitochondrial membrane with NADH-ubiquinone oxidoreductase (complex I, CI), resulting in different assemblies (supercomplexes SCI(1)III(2) and SCI(2)III(4)). Requires Zn(2+) as cofactor.

It localises to the mitochondrion. It is found in the mitochondrion inner membrane. The catalysed reaction is Release of N-terminal transit peptides from precursor proteins imported into the mitochondrion, typically with Arg in position P2.. Its activity is regulated as follows. Binding to the alpha subunit is required for catalytic activity. In terms of biological role, catalytic subunit of the essential mitochondrial processing protease (MPP), which cleaves the mitochondrial sequence off newly imported precursors proteins. Preferentially, cleaves after an arginine at position P2. Its function is as follows. Component of the ubiquinol-cytochrome c oxidoreductase, a multisubunit transmembrane complex that is part of the mitochondrial electron transport chain which drives oxidative phosphorylation. The respiratory chain contains 3 multisubunit complexes succinate dehydrogenase (complex II, CII), ubiquinol-cytochrome c oxidoreductase (cytochrome b-c1 complex, complex III, CIII) and cytochrome c oxidase (complex IV, CIV), that cooperate to transfer electrons derived from NADH and succinate to molecular oxygen, creating an electrochemical gradient over the inner membrane that drives transmembrane transport and the ATP synthase. The cytochrome b-c1 complex catalyzes electron transfer from ubiquinol to cytochrome c, linking this redox reaction to translocation of protons across the mitochondrial inner membrane, with protons being carried across the membrane as hydrogens on the quinol. In the process called Q cycle, 2 protons are consumed from the matrix, 4 protons are released into the intermembrane space and 2 electrons are passed to cytochrome c. The polypeptide is Probable mitochondrial-processing peptidase subunit beta, mitochondrial (MPPbeta) (Arabidopsis thaliana (Mouse-ear cress)).